A 423-amino-acid polypeptide reads, in one-letter code: Testin (423 aa).

Disordered stretches follow at residues 1–21 (MSATHPTRLGTRTKESNACAS) and 138–169 (EKQPVAGSEGAQYRKKQLAKQLPAHDQDPSKC). Residues 97–204 (MILTNPVAAK…GDVKFPSEMN (108 aa)) enclose the PET domain. The segment covering 160-169 (PAHDQDPSKC) has biased composition (basic and acidic residues). 3 consecutive LIM zinc-binding domains span residues 236-299 (YSCY…CDSE), 301-361 (PRCA…NHAV), and 364-423 (QGCH…RMMS).

The protein belongs to the prickle / espinas / testin family. Interacts via LIM domain 1 with ZYX. Interacts (via LIM domain 3) with ENAH and VASP. Interacts with ALKBH4, talin, actin, alpha-actinin, GRIP1 and PXN. Interacts (via LIM domain 2) with ACTL7A (via N-terminus). Heterodimer with ACTL7A; the heterodimer interacts with ENAH to form a heterotrimer. Detected at the acrosome of round spermatids (at protein level). Isoform TES1 transcript is highly expressed in adult testis and detected at low levels in other tissues. Isoform TES2 transcript is highly expressed in testis, kidney and spleen; intermediate in thymus, submaxillary gland and lung; detected at low levels in other tissues.

Its subcellular location is the cytoplasm. It localises to the cell junction. The protein localises to the focal adhesion. Scaffold protein that may play a role in cell adhesion, cell spreading and in the reorganization of the actin cytoskeleton. Plays a role in the regulation of cell proliferation. May act as a tumor suppressor. This Mus musculus (Mouse) protein is Testin (Tes).